The following is a 288-amino-acid chain: Elongation factor Ts (288 aa).

The tract at residues 82–85 (TDFV) is involved in Mg(2+) ion dislocation from EF-Tu.

Belongs to the EF-Ts family.

Its subcellular location is the cytoplasm. Associates with the EF-Tu.GDP complex and induces the exchange of GDP to GTP. It remains bound to the aminoacyl-tRNA.EF-Tu.GTP complex up to the GTP hydrolysis stage on the ribosome. The sequence is that of Elongation factor Ts from Chlorobium luteolum (strain DSM 273 / BCRC 81028 / 2530) (Pelodictyon luteolum).